A 501-amino-acid polypeptide reads, in one-letter code: 25-hydroxyvitamin D-1 alpha hydroxylase, mitochondrial (501 aa).

Cys448 serves as a coordination point for heme.

Belongs to the cytochrome P450 family. Heme is required as a cofactor. Kidney.

Its subcellular location is the mitochondrion membrane. It catalyses the reaction calcidiol + 2 reduced [adrenodoxin] + O2 + 2 H(+) = calcitriol + 2 oxidized [adrenodoxin] + H2O. The catalysed reaction is secalciferol + 2 reduced [adrenodoxin] + O2 + 2 H(+) = calcitetrol + 2 oxidized [adrenodoxin] + H2O. It participates in hormone biosynthesis; cholecalciferol biosynthesis. Catalyzes the conversion of 25-hydroxyvitamin D3 (25(OH)D3) to 1-alpha,25-dihydroxyvitamin D3 (1alpha,25(OH)(2)D3), and of 24,25-dihydroxyvitamin D3 (24,25(OH)(2)D3) to 1-alpha,24,25-trihydroxyvitamin D3 (1alpha,24,25(OH)(3)D3). Is also active with 25-hydroxy-24-oxo-vitamin D3. Plays an important role in normal bone growth, calcium metabolism, and tissue differentiation. The sequence is that of 25-hydroxyvitamin D-1 alpha hydroxylase, mitochondrial (Cyp27b1) from Rattus norvegicus (Rat).